The following is a 625-amino-acid chain: Chaperone protein HtpG (625 aa).

Residues 1-337 form an a; substrate-binding region; the sequence is MSTNQETRGF…TNDLPLNVSR (337 aa). Residues 338–554 are b; sequence EILQENKITA…NDEMTTQMAK (217 aa). Positions 555 to 625 are c; sequence LFAAMGQKAP…FIKRMNKLLG (71 aa).

Belongs to the heat shock protein 90 family. As to quaternary structure, homodimer.

Its subcellular location is the cytoplasm. Its function is as follows. Molecular chaperone. Has ATPase activity. The protein is Chaperone protein HtpG of Actinobacillus pleuropneumoniae serotype 5b (strain L20).